We begin with the raw amino-acid sequence, 97 residues long: Co-chaperonin GroES (97 aa).

Belongs to the GroES chaperonin family. As to quaternary structure, heptamer of 7 subunits arranged in a ring. Interacts with the chaperonin GroEL.

It localises to the cytoplasm. In terms of biological role, together with the chaperonin GroEL, plays an essential role in assisting protein folding. The GroEL-GroES system forms a nano-cage that allows encapsulation of the non-native substrate proteins and provides a physical environment optimized to promote and accelerate protein folding. GroES binds to the apical surface of the GroEL ring, thereby capping the opening of the GroEL channel. The polypeptide is Co-chaperonin GroES (Burkholderia cepacia (Pseudomonas cepacia)).